An 869-amino-acid polypeptide reads, in one-letter code: MAAVDSDVVSLPRGRFRCCLCDVTTANRPSLDAHLKGRKHRDLVQLRATRKAQGLRSVFVSGFPRDVGSAQLSEYFQTFGPVANIVMDKDKGVFAIVEMGDISAREAVLSQPKHSLGGHGLRVRPREQKEFQSPASKSPKGVDSSSHQLVQALAEAADVGAQMVKLVELRELSEAERQLRNLVVALMQEVFTEFFPGCVVHPFGSTVNSFDVHGCDLDLFLDMGDMEETEPDPKAPKVPETSSLDSALASSLDPQALACTPASPLDSLSPTSVQESESLDFDTPSSLAPQTPDSALGSDTVTSPQSLPPVSPLQEDRKEGKQGKELELAEEASKDEKEEAAAVLELVGSILRGCVPGVYRVQTVPSARRPVVKFCHRPSGLHGDVSLSNRLALYNSRFLNLCSEMDGRVRPLVYTLRCWAQHNGLSGGGPLLNNYALTLLVIYFLQTRDPPVLPTVAQLTQRAGEGEQVEVDGWDCSFPKDASRLEPSTNVEPLSSLLAQFFSCVSCLDLSGSLLSLREGRPLMVAEGLPSDLWEGLRLGPMNLQDPFDLSHNVAANVTGRVAKRLQSCCGAAASYCRSLQYQQRSSRGRDWGLLPLLQPSSPSSLLSAKLIPLPSAPFPQVIMALVDVLREALGCHIEQGTKRRRSEGARIKDSPLGGVNKRQRLGGQEKSFEEGKEEPQGCAGDHSENEVEEMVIEVRETPQDWALLHSGPPEEELPLMTANCLDKAAEHNPMKPEVAGEGSQGETGKEASHPSSVSWRCALWHQVWQGRRRARRRLQQQTKEEGRGGPTTGAEWLAMEARVTQELKGPNSEQERPPGEPLLSFVASASQAEQTLTVAPLQDSQGLFPGLHHFLQGFIPQALKNLLK.

The Matrin-type zinc finger occupies 16–46; the sequence is FRCCLCDVTTANRPSLDAHLKGRKHRDLVQL. In terms of domain architecture, RRM spans 56 to 128; it reads RSVFVSGFPR…HGLRVRPREQ (73 aa). The interval 114 to 144 is disordered; that stretch reads HSLGGHGLRVRPREQKEFQSPASKSPKGVDS. An ATP-binding site is contributed by S205. Positions 216 and 218 each coordinate Mg(2+). UTP contacts are provided by D216 and D218. Disordered stretches follow at residues 226-247 and 259-335; these read MEET…LDSA and CTPA…ASKD. 2 stretches are compositionally biased toward polar residues: residues 266–276 and 283–299; these read DSLSPTSVQES and TPSS…LGSD. Residues 314 to 335 show a composition bias toward basic and acidic residues; the sequence is QEDRKEGKQGKELELAEEASKD. N395 provides a ligand contact to ATP. Residues N395, R417, Y435, and H552 each coordinate UTP. In terms of domain architecture, PAP-associated spans 494–552; it reads LSSLLAQFFSCVSCLDLSGSLLSLREGRPLMVAEGLPSDLWEGLRLGPMNLQDPFDLSH. Residues 601–869 form a KA1; binds the bulging loops of U6 snRNA but is dispensable for terminal uridylyltransferase activity region; it reads SSPSSLLSAK…IPQALKNLLK (269 aa). Disordered regions lie at residues 640-689, 735-757, 775-796, and 803-822; these read QGTK…DHSE, MKPE…HPSS, ARRR…TGAE, and RVTQ…PGEP. Residues 671–689 show a composition bias toward basic and acidic residues; the sequence is KSFEEGKEEPQGCAGDHSE. Phosphoserine is present on residues S688 and S744.

Belongs to the DNA polymerase type-B-like family. Associates with the cleavage and polyadenylation specificity factor (CPSF) complex. Interacts with CPSF1 and CPSF3; the interaction is direct. Interacts with PIP5K1A. Mg(2+) is required as a cofactor. Mn(2+) serves as cofactor. Post-translationally, phosphorylated by CK1 in the proline-rich (Pro-rich) region.

The protein resides in the nucleus. It localises to the nucleolus. The protein localises to the nucleus speckle. The catalysed reaction is RNA(n) + UTP = RNA(n)-3'-uridine ribonucleotide + diphosphate. It catalyses the reaction RNA(n) + ATP = RNA(n)-3'-adenine ribonucleotide + diphosphate. With respect to regulation, adenylyltransferase activity is specifically phosphatidylinositol 4,5-bisphosphate (PtdIns(4,5)P2). Poly(A) polymerase that creates the 3'-poly(A) tail of specific pre-mRNAs. Localizes to nuclear speckles together with PIP5K1A and mediates polyadenylation of a select set of mRNAs, such as HMOX1. In addition to polyadenylation, it is also required for the 3'-end cleavage of pre-mRNAs: binds to the 3'UTR of targeted pre-mRNAs and promotes the recruitment and assembly of the CPSF complex on the 3'UTR of pre-mRNAs. In addition to adenylyltransferase activity, also has uridylyltransferase activity. However, the ATP ratio is higher than UTP in cells, suggesting that it functions primarily as a poly(A) polymerase. Acts as a specific terminal uridylyltransferase for U6 snRNA in vitro: responsible for a controlled elongation reaction that results in the restoration of the four 3'-terminal UMP-residues found in newly transcribed U6 snRNA. Not involved in replication-dependent histone mRNA degradation. This chain is Speckle targeted PIP5K1A-regulated poly(A) polymerase (Tut1), found in Mus musculus (Mouse).